Reading from the N-terminus, the 85-residue chain is Cell division topological specificity factor (85 aa).

It belongs to the MinE family.

In terms of biological role, prevents the cell division inhibition by proteins MinC and MinD at internal division sites while permitting inhibition at polar sites. This ensures cell division at the proper site by restricting the formation of a division septum at the midpoint of the long axis of the cell. This is Cell division topological specificity factor from Dechloromonas aromatica (strain RCB).